A 48-amino-acid polypeptide reads, in one-letter code: Large ribosomal subunit protein bL33A (48 aa).

Belongs to the bacterial ribosomal protein bL33 family.

The protein is Large ribosomal subunit protein bL33A of Metamycoplasma arthritidis (strain 158L3-1) (Mycoplasma arthritidis).